We begin with the raw amino-acid sequence, 409 residues long: Elongation factor Tu (409 aa).

Residues 10-214 (KPHVNIGTIG…AVDAYIPTPE (205 aa)) form the tr-type G domain. Residues 19–26 (GHVDHGKT) are G1. Position 19-26 (19-26 (GHVDHGKT)) interacts with GTP. Threonine 26 contacts Mg(2+). Positions 60 to 64 (GITIN) are G2. A G3 region spans residues 81–84 (DCPG). GTP is bound by residues 81-85 (DCPGH) and 136-139 (NKKD). The G4 stretch occupies residues 136-139 (NKKD). The tract at residues 174 to 176 (SAL) is G5.

It belongs to the TRAFAC class translation factor GTPase superfamily. Classic translation factor GTPase family. EF-Tu/EF-1A subfamily. Monomer.

The protein localises to the cytoplasm. The catalysed reaction is GTP + H2O = GDP + phosphate + H(+). In terms of biological role, GTP hydrolase that promotes the GTP-dependent binding of aminoacyl-tRNA to the A-site of ribosomes during protein biosynthesis. This is Elongation factor Tu from Gloeobacter violaceus (strain ATCC 29082 / PCC 7421).